The primary structure comprises 953 residues: Pyruvate, phosphate dikinase, chloroplastic (953 aa).

Residues 1-77 constitute a chloroplast transit peptide; that stretch reads MMSSLSVEGM…VLNPVSPPVT (77 aa). Positions 55–74 are disordered; that stretch reads PELRSSGLTPPRAVLNPVSP. Threonine 533 bears the Phosphothreonine; by PDRP1 mark. The active-site Tele-phosphohistidine intermediate is the histidine 535. Arginine 641, arginine 698, glutamate 827, glycine 848, threonine 849, asparagine 850, and aspartate 851 together coordinate substrate. Glutamate 827 serves as a coordination point for Mg(2+). Aspartate 851 contacts Mg(2+). Cysteine 913 (proton donor) is an active-site residue.

The protein belongs to the PEP-utilizing enzyme family. In terms of assembly, homotetramer. Mg(2+) is required as a cofactor. Post-translationally, phosphorylation of Thr-533 in the dark inactivates the enzyme. Dephosphorylation upon light stimulation reactivates the enzyme.

The protein resides in the plastid. Its subcellular location is the chloroplast. It catalyses the reaction pyruvate + phosphate + ATP = phosphoenolpyruvate + AMP + diphosphate + H(+). The protein operates within photosynthesis; C4 acid pathway. Activated by light-induced dephosphorylation. Inhibited by dark-induced phosphorylation. Both reactions are catalyzed by PDRP1. Inactivated by cold due to the dissociation of the homotetramer. Formation of phosphoenolpyruvate, which is the primary acceptor of CO(2) in C4 and some Crassulacean acid metabolism plants. This Flaveria bidentis (Coastal plain yellowtops) protein is Pyruvate, phosphate dikinase, chloroplastic.